A 188-amino-acid chain; its full sequence is Guanylate kinase (188 aa).

The 180-residue stretch at 4-183 folds into the Guanylate kinase-like domain; that stretch reads RNIVVLTAPS…AVEETLTRIR (180 aa). An ATP-binding site is contributed by 11–18; the sequence is APSGAGKT.

It belongs to the guanylate kinase family.

It is found in the cytoplasm. The enzyme catalyses GMP + ATP = GDP + ADP. In terms of biological role, essential for recycling GMP and indirectly, cGMP. This chain is Guanylate kinase, found in Salinibacter ruber (strain DSM 13855 / M31).